A 332-amino-acid chain; its full sequence is Adenosine deaminase (332 aa).

Positions 12 and 14 each coordinate Zn(2+). Substrate-binding residues include His-14, Asp-16, and Gly-169. Position 196 (His-196) interacts with Zn(2+). The Proton donor role is filled by Glu-199. Residue Asp-277 coordinates Zn(2+).

Belongs to the metallo-dependent hydrolases superfamily. Adenosine and AMP deaminases family. Adenosine deaminase subfamily. Zn(2+) serves as cofactor.

It catalyses the reaction adenosine + H2O + H(+) = inosine + NH4(+). It carries out the reaction 2'-deoxyadenosine + H2O + H(+) = 2'-deoxyinosine + NH4(+). Functionally, catalyzes the hydrolytic deamination of adenosine and 2-deoxyadenosine. This chain is Adenosine deaminase, found in Vibrio atlanticus (strain LGP32) (Vibrio splendidus (strain Mel32)).